The sequence spans 146 residues: Hemoglobin subunit beta-S/F (146 aa).

V1 carries the N-acetylvaline modification. The Globin domain occupies 2–146 (HLTDGEKNAI…VANALSHKYH (145 aa)). At S44 the chain carries Phosphoserine. An N6-acetyllysine modification is found at K59. H63 contacts heme b. N6-acetyllysine is present on K82. H92 contributes to the heme b binding site. C93 is subject to S-nitrosocysteine. Position 144 is an N6-acetyllysine (K144).

It belongs to the globin family. In terms of assembly, heterotetramer of two alpha chains and two beta chains. Red blood cells.

Involved in oxygen transport from the lung to the various peripheral tissues. In Urocitellus townsendii (Townsend's ground squirrel), this protein is Hemoglobin subunit beta-S/F.